We begin with the raw amino-acid sequence, 244 residues long: Fumarate reductase iron-sulfur subunit (244 aa).

Tyrosine 14 provides a ligand contact to a menaquinone. A 2Fe-2S ferredoxin-type domain is found at 16–97 (PEVDTAPHSA…GMKVEALANF (82 aa)). [2Fe-2S] cluster-binding residues include cysteine 58, cysteine 63, cysteine 66, and cysteine 78. Residues 140 to 169 (MAKYHQFSGCINCGLCYAACPQFGLNPEFI) enclose the 4Fe-4S ferredoxin-type domain. Positions 149, 152, and 155 each coordinate [4Fe-4S] cluster. Cysteine 159, cysteine 205, and cysteine 211 together coordinate [3Fe-4S] cluster. Cysteine 215 is a [4Fe-4S] cluster binding site. 226 to 229 (QQGK) provides a ligand contact to a menaquinone.

The protein belongs to the succinate dehydrogenase/fumarate reductase iron-sulfur protein family. As to quaternary structure, fumarate dehydrogenase forms part of an enzyme complex containing four subunits: a flavoprotein, an iron-sulfur, and two hydrophobic anchor proteins. [2Fe-2S] cluster serves as cofactor. Requires [3Fe-4S] cluster as cofactor. It depends on [4Fe-4S] cluster as a cofactor.

The protein resides in the cell inner membrane. It catalyses the reaction a quinone + succinate = fumarate + a quinol. The enzyme catalyses a menaquinone + succinate = a menaquinol + fumarate. Functionally, two distinct, membrane-bound, FAD-containing enzymes are responsible for the catalysis of fumarate and succinate interconversion; the fumarate reductase is used in anaerobic growth, and the succinate dehydrogenase is used in aerobic growth. The chain is Fumarate reductase iron-sulfur subunit (frdB) from Escherichia coli O157:H7.